A 149-amino-acid chain; its full sequence is Large ribosomal subunit protein bL9 (149 aa).

This sequence belongs to the bacterial ribosomal protein bL9 family.

Binds to the 23S rRNA. The protein is Large ribosomal subunit protein bL9 of Salinibacter ruber (strain DSM 13855 / M31).